A 332-amino-acid polypeptide reads, in one-letter code: Leucine carboxyl methyltransferase 1 homolog (332 aa).

Residues K22, R57, G83, D107, 153-154 (DL), and E180 each bind S-adenosyl-L-methionine.

Belongs to the methyltransferase superfamily. LCMT family.

It is found in the cytoplasm. The protein resides in the membrane. It carries out the reaction [phosphatase 2A protein]-C-terminal L-leucine + S-adenosyl-L-methionine = [phosphatase 2A protein]-C-terminal L-leucine methyl ester + S-adenosyl-L-homocysteine. Methylates the carboxyl group of the C-terminal leucine residue of protein phosphatase 2A (PP2A) catalytic subunits to form alpha-leucine ester residues. Involved in brassinosteroid (BR) signaling. Plays a negative role in BR signaling pathway. Functions as a positive regulator of BRI1 receptor-kinase degradation. Methylates PP2A, thus facilitating its association with activated BRI1. This leads to receptor dephosphorylation and degradation, and thus to the termination of BR signaling. May act upstream of ASK7/BIN2. Involved in methylation of PP2A during environmental stress responses. The chain is Leucine carboxyl methyltransferase 1 homolog from Arabidopsis thaliana (Mouse-ear cress).